The chain runs to 130 residues: Large ribosomal subunit protein bL17 (130 aa).

This sequence belongs to the bacterial ribosomal protein bL17 family. As to quaternary structure, part of the 50S ribosomal subunit. Contacts protein L32.

In Azotobacter vinelandii (strain DJ / ATCC BAA-1303), this protein is Large ribosomal subunit protein bL17.